A 1893-amino-acid chain; its full sequence is Nestin (1893 aa).

The residue at position 1 (Met-1) is an N-acetylmethionine. The interval 1 to 7 (MEGCVGE) is head. The tract at residues 8–43 (ESFQMWELNRRLEAYLTRVKTLEEQNQLLSAELGGL) is coil 1A. The IF rod domain occupies 8 to 314 (ESFQMWELNR…TLLEAENSRL (307 aa)). Positions 44–55 (RAQSGDTSWRAR) are linker 1. Residues 56–151 (ADDELASLRI…AAHEEERAHL (96 aa)) form a coil 1B region. The tract at residues 150–172 (HLNAQAACAPRRPPAPPHGSPVR) is disordered. The interval 152–174 (NAQAACAPRRPPAPPHGSPVRAP) is linker 12. Residues 175–193 (EVEDLARRLGEVWRGAVRD) form a coil 2A region. Residues 194–196 (YQE) are linker 2. The tract at residues 197–314 (RVAHMESSLG…TLLEAENSRL (118 aa)) is coil 2B. Ser-312 carries the phosphoserine modification. The tail stretch occupies residues 315–1893 (QTPGRGSQAS…DGDSWSSGED (1579 aa)). Residue Thr-316 is modified to Phosphothreonine. Phosphoserine is present on residues Ser-356 and Ser-359. Thr-389 carries the phosphothreonine modification. Disordered stretches follow at residues 437–479 (PELE…SGSR), 507–529 (NSSA…SQGP), and 556–879 (KENC…NQKS). Over residues 507-517 (NSSAQKTQESG) the composition is skewed to polar residues. The residue at position 562 (Ser-562) is a Phosphoserine. Basic and acidic residues-rich tracts occupy residues 572 to 595 (GPEK…EKTL) and 606 to 615 (LGKEDTRTED). A Phosphoserine modification is found at Ser-620. Basic and acidic residues-rich tracts occupy residues 634–646 (ESQE…KEGN) and 670–681 (MLERLVEKEDQS). Residues Ser-685 and Ser-729 each carry the phosphoserine modification. Composition is skewed to basic and acidic residues over residues 717 to 730 (RLIE…LRSP), 761 to 774 (RLIE…LRSA), 802 to 818 (ILER…LRSP), and 846 to 879 (MLER…NQKS). Ser-817 carries the phosphoserine modification. Ser-903 is modified (phosphoserine). Composition is skewed to basic and acidic residues over residues 949–966 (LLED…DRNG) and 989–1051 (QRIV…KSLE). The segment at 949-1130 (LLEDKTHKSL…ARSLGKENQE (182 aa)) is disordered. Phosphoserine occurs at positions 1005 and 1049. A Glycyl lysine isopeptide (Lys-Gly) (interchain with G-Cter in SUMO1); alternate cross-link involves residue Lys-1136. A Glycyl lysine isopeptide (Lys-Gly) (interchain with G-Cter in SUMO2); alternate cross-link involves residue Lys-1136. Phosphoserine occurs at positions 1145 and 1166. Residues 1155–1222 (ETAEEDLERR…ELSSLGKWNV (68 aa)) form a disordered region. Over residues 1198–1212 (DENRETLTSLEKESQ) the composition is skewed to basic and acidic residues. Residues Ser-1216 and Ser-1229 each carry the phosphoserine modification. Residues 1237 to 1263 (EGLQEEQHQESLREVKQELPSSGNQQR) form a disordered region. Over residues 1241-1253 (EEQHQESLREVKQ) the composition is skewed to basic and acidic residues. Position 1322 is a phosphoserine (Ser-1322). 2 disordered regions span residues 1336 to 1369 (DNLE…EQDS) and 1388 to 1824 (EVVG…SEQV). 2 stretches are compositionally biased toward basic and acidic residues: residues 1354–1363 (VTERDEDRAQ) and 1393–1403 (EDPRHFAREEA). Acidic residues-rich tracts occupy residues 1458–1469 (ESMEGWEEEEAS) and 1561–1576 (QDWE…DDLG). Phosphoserine occurs at positions 1570, 1594, 1686, 1695, 1772, and 1774. The span at 1688–1709 (GFADEEESGEEGEEEDADEEGA) shows a compositional bias: acidic residues. The segment covering 1773–1788 (GSEESESASLEGEEGQ) has biased composition (acidic residues). Positions 1815–1824 (QSPNLDSEQV) are enriched in polar residues. Phosphoserine occurs at positions 1866, 1889, and 1890. Positions 1870–1893 (LGPSQPLKFTLSGVDGDSWSSGED) are disordered.

This sequence belongs to the intermediate filament family. Forms homodimers and homotetramers in vitro. In mixtures with other intermediate filament proteins such as vimentin and alpha-internexin, this protein preferentially forms heterodimers which can assemble to form intermediate filaments if nestin does not exceed 25%. Interacts with FHOD3. Post-translationally, constitutively phosphorylated. This increases during mitosis when the cytoplasmic intermediate filament network is reorganized. In terms of tissue distribution, CNS stem cells.

Its function is as follows. Required for brain and eye development. Promotes the disassembly of phosphorylated vimentin intermediate filaments (IF) during mitosis and may play a role in the trafficking and distribution of IF proteins and other cellular factors to daughter cells during progenitor cell division. Required for survival, renewal and mitogen-stimulated proliferation of neural progenitor cells. In Rattus norvegicus (Rat), this protein is Nestin (Nes).